Here is a 295-residue protein sequence, read N- to C-terminus: Shikimate dehydrogenase (NADP(+)) (295 aa).

Shikimate-binding positions include 21 to 23 and Thr-68; that span reads SLS. Lys-72 acts as the Proton acceptor in catalysis. 2 residues coordinate shikimate: Asn-93 and Asp-108. Residues 132 to 136, 156 to 161, and Leu-228 contribute to the NADP(+) site; these read GAGGA and NRTPER. Residue Tyr-230 participates in shikimate binding. Gly-251 lines the NADP(+) pocket.

This sequence belongs to the shikimate dehydrogenase family. In terms of assembly, homodimer.

It carries out the reaction shikimate + NADP(+) = 3-dehydroshikimate + NADPH + H(+). The protein operates within metabolic intermediate biosynthesis; chorismate biosynthesis; chorismate from D-erythrose 4-phosphate and phosphoenolpyruvate: step 4/7. Involved in the biosynthesis of the chorismate, which leads to the biosynthesis of aromatic amino acids. Catalyzes the reversible NADPH linked reduction of 3-dehydroshikimate (DHSA) to yield shikimate (SA). In Moorella thermoacetica (strain ATCC 39073 / JCM 9320), this protein is Shikimate dehydrogenase (NADP(+)).